The chain runs to 165 residues: Protein SEED AND ROOT HAIR PROTECTIVE PROTEIN (165 aa).

Positions 1-24 are cleaved as a signal peptide; it reads MAFSRLSFAASLIVFSSLIISSVA.

Belongs to the plant proline-rich protein superfamily. As to expression, root hair and seed specific expression. Also observed in other tissues including siliques, roots and flowers.

Its subcellular location is the secreted. It localises to the cell wall. Functionally, contributes to cell wall structure in root hairs and seeds, especially in phosphate (Pi) deprivation conditions or in the presence of ethylene. Particularly important in maternal tissues (pericarps and seed coats) during seed development, especially under stress conditions. Confers thermotolerance in seed germination rate. The chain is Protein SEED AND ROOT HAIR PROTECTIVE PROTEIN from Arabidopsis thaliana (Mouse-ear cress).